A 272-amino-acid chain; its full sequence is Cell division protein FtsQ (272 aa).

Topologically, residues 1 to 43 (MEYNPPNTRERIAARRQRLRQPSSEPAIPGWRRRFIDGLQSGR) are cytoplasmic. A helical transmembrane segment spans residues 44-64 (IVSGAVFVVSCLALFYVLFSS). The Extracellular segment spans residues 65–272 (QFRVQTVEVV…FYQNRTDGRS (208 aa)). In terms of domain architecture, POTRA spans 66-133 (FRVQTVEVVG…DRARIVIVER (68 aa)).

The protein belongs to the FtsQ/DivIB family. FtsQ subfamily.

Its subcellular location is the cell membrane. Its function is as follows. Essential cell division protein. This Chloroflexus aggregans (strain MD-66 / DSM 9485) protein is Cell division protein FtsQ.